A 500-amino-acid polypeptide reads, in one-letter code: Histidine ammonia-lyase (500 aa).

Positions 142 to 144 form a cross-link, 5-imidazolinone (Ala-Gly); sequence ASG. The residue at position 143 (S143) is a 2,3-didehydroalanine (Ser).

The protein belongs to the PAL/histidase family. Post-translationally, contains an active site 4-methylidene-imidazol-5-one (MIO), which is formed autocatalytically by cyclization and dehydration of residues Ala-Ser-Gly.

Its subcellular location is the cytoplasm. It carries out the reaction L-histidine = trans-urocanate + NH4(+). It participates in amino-acid degradation; L-histidine degradation into L-glutamate; N-formimidoyl-L-glutamate from L-histidine: step 1/3. The protein is Histidine ammonia-lyase of Macrococcus caseolyticus (strain JCSC5402) (Macrococcoides caseolyticum).